The chain runs to 429 residues: S-adenosylmethionine synthase (429 aa).

Glu9 contributes to the Mg(2+) binding site. Residue His15 coordinates ATP. Glu43 provides a ligand contact to K(+). L-methionine is bound by residues Glu56 and Gln99. Residues 167-169 (DGK), 235-238 (SGRF), Asp246, 252-253 (RK), Ala269, Lys273, and Lys277 each bind ATP. Asp246 serves as a coordination point for L-methionine. Lys277 is a binding site for L-methionine.

The protein belongs to the AdoMet synthase family. In terms of assembly, homotetramer. Requires Mn(2+) as cofactor. The cofactor is Mg(2+). Co(2+) is required as a cofactor. It depends on K(+) as a cofactor.

The protein resides in the cytoplasm. The enzyme catalyses L-methionine + ATP + H2O = S-adenosyl-L-methionine + phosphate + diphosphate. It participates in amino-acid biosynthesis; S-adenosyl-L-methionine biosynthesis; S-adenosyl-L-methionine from L-methionine: step 1/1. Its function is as follows. Catalyzes the formation of S-adenosylmethionine from methionine and ATP. The reaction comprises two steps that are both catalyzed by the same enzyme: formation of S-adenosylmethionine (AdoMet) and triphosphate, and subsequent hydrolysis of the triphosphate. The chain is S-adenosylmethionine synthase (SAMS) from Carica papaya (Papaya).